A 266-amino-acid polypeptide reads, in one-letter code: DNA-directed RNA polymerase subunit Rpo3 (266 aa).

Residues C205, C208, and C211 each coordinate [3Fe-4S] cluster.

This sequence belongs to the archaeal Rpo3/eukaryotic RPB3 RNA polymerase subunit family. In terms of assembly, part of the RNA polymerase complex. Requires [3Fe-4S] cluster as cofactor.

The protein resides in the cytoplasm. It catalyses the reaction RNA(n) + a ribonucleoside 5'-triphosphate = RNA(n+1) + diphosphate. Functionally, DNA-dependent RNA polymerase (RNAP) catalyzes the transcription of DNA into RNA using the four ribonucleoside triphosphates as substrates. The polypeptide is DNA-directed RNA polymerase subunit Rpo3 (Methanosarcina acetivorans (strain ATCC 35395 / DSM 2834 / JCM 12185 / C2A)).